We begin with the raw amino-acid sequence, 348 residues long: Alpha-2-HS-glycoprotein (348 aa).

An N-terminal signal peptide occupies residues 1–18 (MKTLVLLLCFTLLWGCQS). The region spanning 19–133 (APQGTGLGFR…QFSVMHTKCH (115 aa)) is the Cystatin fetuin-A-type 1 domain. 6 cysteine pairs are disulfide-bonded: Cys-32–Cys-339, Cys-89–Cys-100, Cys-114–Cys-132, Cys-146–Cys-149, Cys-208–Cys-219, and Cys-230–Cys-247. The N-linked (GlcNAc...) asparagine glycan is linked to Asn-99. Phosphoserine is present on residues Ser-134 and Ser-138. In terms of domain architecture, Cystatin fetuin-A-type 2 spans 144–255 (KVCPHCALLT…TCTAFPTQAN (112 aa)). 2 N-linked (GlcNAc...) asparagine glycosylation sites follow: Asn-156 and Asn-176. 4 positions are modified to phosphoserine: Ser-307, Ser-311, Ser-314, and Ser-316.

It belongs to the fetuin family. Phosphorylated by FAM20C in the extracellular medium. Expressed by the liver and secreted in plasma.

The protein resides in the secreted. The chain is Alpha-2-HS-glycoprotein (AHSG) from Meriones unguiculatus (Mongolian jird).